Consider the following 23-residue polypeptide: Acidic phospholipase A2 CTs-A1 (23 aa).

Ca(2+) is required as a cofactor. In terms of processing, contains 7 disulfide bonds. In terms of tissue distribution, expressed by the venom gland.

It is found in the secreted. It carries out the reaction a 1,2-diacyl-sn-glycero-3-phosphocholine + H2O = a 1-acyl-sn-glycero-3-phosphocholine + a fatty acid + H(+). Its function is as follows. Snake venom phospholipase A2 (PLA2) that shows a moderate inhibition of ADP-induced human platelet aggregation when tested on platelet rich plasma. Exhibits moderate hydrolytic activities and prefers the anionic micelles (dPPC with deoxycholate) to the zwitterionic micelles (dPPC with Triton X-100). PLA2 catalyzes the calcium-dependent hydrolysis of the 2-acyl groups in 3-sn-phosphoglycerides. The protein is Acidic phospholipase A2 CTs-A1 of Trimeresurus stejnegeri (Chinese green tree viper).